Here is a 252-residue protein sequence, read N- to C-terminus: Trans-aconitate 2-methyltransferase (252 aa).

This sequence belongs to the methyltransferase superfamily. Tam family.

Its subcellular location is the cytoplasm. The enzyme catalyses trans-aconitate + S-adenosyl-L-methionine = (E)-3-(methoxycarbonyl)pent-2-enedioate + S-adenosyl-L-homocysteine. Functionally, catalyzes the S-adenosylmethionine monomethyl esterification of trans-aconitate. The chain is Trans-aconitate 2-methyltransferase from Escherichia fergusonii (strain ATCC 35469 / DSM 13698 / CCUG 18766 / IAM 14443 / JCM 21226 / LMG 7866 / NBRC 102419 / NCTC 12128 / CDC 0568-73).